We begin with the raw amino-acid sequence, 217 residues long: Peroxiredoxin Q, chloroplastic (217 aa).

A chloroplast-targeting transit peptide spans 1 to 66 (MAFAASTACC…RRRAASTGIV (66 aa)). Residues 70–217 (VSKGSVPPNF…GETLKIIQNL (148 aa)) enclose the Thioredoxin domain. The active-site Cysteine sulfenic acid (-SOH) intermediate is Cys-112. Cys-112 and Cys-117 are oxidised to a cystine.

The protein belongs to the peroxiredoxin family. BCP/PrxQ subfamily. Monomer.

It is found in the plastid. The protein localises to the chloroplast thylakoid lumen. The catalysed reaction is a hydroperoxide + [thioredoxin]-dithiol = an alcohol + [thioredoxin]-disulfide + H2O. In terms of biological role, thiol-specific peroxidase that catalyzes the reduction of hydrogen peroxide and organic hydroperoxides to water and alcohols, respectively. Plays a role in cell protection against oxidative stress by detoxifying peroxides. This is Peroxiredoxin Q, chloroplastic (PRX1) from Triticum aestivum (Wheat).